The chain runs to 515 residues: Ribose import ATP-binding protein RbsA 1 (515 aa).

ABC transporter domains are found at residues 8-244 and 256-503; these read FQME…IGRE and VPAT…LNIH. 40 to 47 contacts ATP; it reads GENGAGKS.

This sequence belongs to the ABC transporter superfamily. Ribose importer (TC 3.A.1.2.1) family. As to quaternary structure, the complex is composed of an ATP-binding protein (RbsA), two transmembrane proteins (RbsC) and a solute-binding protein (RbsB).

The protein localises to the cell inner membrane. The enzyme catalyses D-ribose(out) + ATP + H2O = D-ribose(in) + ADP + phosphate + H(+). In terms of biological role, part of the ABC transporter complex RbsABC involved in ribose import. Responsible for energy coupling to the transport system. The sequence is that of Ribose import ATP-binding protein RbsA 1 from Mesorhizobium japonicum (strain LMG 29417 / CECT 9101 / MAFF 303099) (Mesorhizobium loti (strain MAFF 303099)).